The primary structure comprises 135 residues: Photosystem II extrinsic protein U (135 aa).

The signal sequence occupies residues 1-29 (MKRLLSWLTGALVMASLMAGLVMPSSVYA).

It belongs to the PsbU family. PSII is composed of 1 copy each of membrane proteins PsbA, PsbB, PsbC, PsbD, PsbE, PsbF, PsbH, PsbI, PsbJ, PsbK, PsbL, PsbM, PsbT, PsbX, PsbY, PsbZ, Psb30/Ycf12, peripheral proteins PsbO, CyanoQ (PsbQ), PsbU, PsbV and a large number of cofactors. It forms dimeric complexes.

It localises to the cellular thylakoid membrane. One of the extrinsic, lumenal subunits of photosystem II (PSII). PSII is a light-driven water plastoquinone oxidoreductase, using light energy to abstract electrons from H(2)O, generating a proton gradient subsequently used for ATP formation. The extrinsic proteins stabilize the structure of photosystem II oxygen-evolving complex (OEC), the ion environment of oxygen evolution and protect the OEC against heat-induced inactivation. The polypeptide is Photosystem II extrinsic protein U (Synechococcus sp. (strain CC9605)).